A 281-amino-acid polypeptide reads, in one-letter code: Cis-2,3-dihydrobiphenyl-2,3-diol dehydrogenase (281 aa).

Residue 10–34 participates in NAD(+) binding; sequence ITGGASGLGRALVDRFVAEGARVAV. Position 142 (serine 142) interacts with substrate. Tyrosine 155 (proton acceptor) is an active-site residue.

It belongs to the short-chain dehydrogenases/reductases (SDR) family. Homotetramer.

The enzyme catalyses (2R,3S)-3-phenylcyclohexa-3,5-diene-1,2-diol + NAD(+) = biphenyl-2,3-diol + NADH + H(+). Its pathway is xenobiotic degradation; biphenyl degradation; 2-hydroxy-2,4-pentadienoate and benzoate from biphenyl: step 2/4. The sequence is that of Cis-2,3-dihydrobiphenyl-2,3-diol dehydrogenase (bphB) from Comamonas testosteroni (Pseudomonas testosteroni).